The sequence spans 605 residues: DNA primase (605 aa).

Residues 38–62 (CPFHDEKTPSFTVSEDKQICHCFGC) form a CHC2-type zinc finger. The region spanning 260–341 (DEIVLLEGFM…NVFVIQLPSG (82 aa)) is the Toprim domain. E266, D310, and D312 together coordinate Mg(2+).

This sequence belongs to the DnaG primase family. As to quaternary structure, monomer. Interacts with DnaB. It depends on Zn(2+) as a cofactor. Requires Mg(2+) as cofactor.

The enzyme catalyses ssDNA + n NTP = ssDNA/pppN(pN)n-1 hybrid + (n-1) diphosphate.. Functionally, RNA polymerase that catalyzes the synthesis of short RNA molecules used as primers for DNA polymerase during DNA replication. This chain is DNA primase, found in Staphylococcus aureus (strain MW2).